Here is a 633-residue protein sequence, read N- to C-terminus: Phosphomethylpyrimidine synthase (633 aa).

Substrate-binding positions include Asn-245, Met-274, Tyr-303, His-339, 359 to 361 (SRG), 400 to 403 (DGLR), and Glu-439. His-443 serves as a coordination point for Zn(2+). Tyr-466 provides a ligand contact to substrate. His-507 contributes to the Zn(2+) binding site. The [4Fe-4S] cluster site is built by Cys-587, Cys-590, and Cys-595.

The protein belongs to the ThiC family. In terms of assembly, homodimer. Requires [4Fe-4S] cluster as cofactor.

It catalyses the reaction 5-amino-1-(5-phospho-beta-D-ribosyl)imidazole + S-adenosyl-L-methionine = 4-amino-2-methyl-5-(phosphooxymethyl)pyrimidine + CO + 5'-deoxyadenosine + formate + L-methionine + 3 H(+). It participates in cofactor biosynthesis; thiamine diphosphate biosynthesis. Its function is as follows. Catalyzes the synthesis of the hydroxymethylpyrimidine phosphate (HMP-P) moiety of thiamine from aminoimidazole ribotide (AIR) in a radical S-adenosyl-L-methionine (SAM)-dependent reaction. This Neisseria meningitidis serogroup C / serotype 2a (strain ATCC 700532 / DSM 15464 / FAM18) protein is Phosphomethylpyrimidine synthase.